We begin with the raw amino-acid sequence, 122 residues long: Large ribosomal subunit protein uL14c (122 aa).

It belongs to the universal ribosomal protein uL14 family. As to quaternary structure, part of the 50S ribosomal subunit.

The protein resides in the plastid. It is found in the chloroplast. Its function is as follows. Binds to 23S rRNA. This chain is Large ribosomal subunit protein uL14c, found in Tupiella akineta (Green alga).